Consider the following 348-residue polypeptide: Dihydroorotase (348 aa).

2 residues coordinate Zn(2+): His14 and His16. Substrate-binding positions include 16 to 18 and Asn42; that span reads HLR. Zn(2+)-binding residues include Lys100, His137, and His175. Lys100 is subject to N6-carboxylysine. Substrate is bound at residue His137. Leu220 contacts substrate. Asp248 contacts Zn(2+). Asp248 is an active-site residue. Residues His252 and Ala264 each contribute to the substrate site.

It belongs to the metallo-dependent hydrolases superfamily. DHOase family. Class II DHOase subfamily. As to quaternary structure, homodimer. Zn(2+) is required as a cofactor.

The catalysed reaction is (S)-dihydroorotate + H2O = N-carbamoyl-L-aspartate + H(+). It participates in pyrimidine metabolism; UMP biosynthesis via de novo pathway; (S)-dihydroorotate from bicarbonate: step 3/3. In terms of biological role, catalyzes the reversible cyclization of carbamoyl aspartate to dihydroorotate. The polypeptide is Dihydroorotase (Pseudomonas aeruginosa (strain LESB58)).